We begin with the raw amino-acid sequence, 244 residues long: Phosphoadenosine 5'-phosphosulfate reductase (244 aa).

Cysteine 239 serves as the catalytic Nucleophile; cysteine thiosulfonate intermediate.

The protein belongs to the PAPS reductase family. CysH subfamily.

It is found in the cytoplasm. The enzyme catalyses [thioredoxin]-disulfide + sulfite + adenosine 3',5'-bisphosphate + 2 H(+) = [thioredoxin]-dithiol + 3'-phosphoadenylyl sulfate. The protein operates within sulfur metabolism; hydrogen sulfide biosynthesis; sulfite from sulfate: step 3/3. In terms of biological role, catalyzes the formation of sulfite from phosphoadenosine 5'-phosphosulfate (PAPS) using thioredoxin as an electron donor. The sequence is that of Phosphoadenosine 5'-phosphosulfate reductase from Shigella flexneri.